A 199-amino-acid chain; its full sequence is Recombination protein RecR (199 aa).

The C4-type zinc finger occupies 56–71 (CRSCFNVAQSELCRIC). One can recognise a Toprim domain in the interval 79–174 (ALICVVEEPK…RVTRLASGLP (96 aa)).

Belongs to the RecR family.

May play a role in DNA repair. It seems to be involved in an RecBC-independent recombinational process of DNA repair. It may act with RecF and RecO. The chain is Recombination protein RecR from Frankia alni (strain DSM 45986 / CECT 9034 / ACN14a).